A 425-amino-acid chain; its full sequence is MTNKEAFELAKKYMPGGVSSPVRAFKSVGAEPIVVNRGFGAFVEDIEGKKYIDYMLSFGPLILGHRSEIVVSKIMEALDKGNSFGITNMYEIELSELIIKASKVIDKVRFVSSGTEAVMSAIRLARGITNKPYIIKFDGCYHGFSDSVLVGAGSGVATLGIPGTPGIPKEFAALTIVLDYNDENALEEAFIKYKNQIAAVLVEPVAGNMGVVLPKESWLKKLRDITKENDALLIFDEVITGFRLALGGAAEYFGIEPDIVCYGKIIGGGMPIGAYGAKNHIMERVAPEGPIYQAGTLSGNPISVASGLAILKTLIKDIAIYDRLSELRAYLTYTLSKMLSEKGIPHRINEIASMFTIFFTDKDVIDFKSAKTSDTALFGKFFRNALKEGVLMPPSQFEAWFLSTAHTKDVVDTTLEKLKKAIDLL.

N6-(pyridoxal phosphate)lysine is present on lysine 264.

Belongs to the class-III pyridoxal-phosphate-dependent aminotransferase family. HemL subfamily. In terms of assembly, homodimer. It depends on pyridoxal 5'-phosphate as a cofactor.

The protein resides in the cytoplasm. It carries out the reaction (S)-4-amino-5-oxopentanoate = 5-aminolevulinate. It participates in porphyrin-containing compound metabolism; protoporphyrin-IX biosynthesis; 5-aminolevulinate from L-glutamyl-tRNA(Glu): step 2/2. This is Glutamate-1-semialdehyde 2,1-aminomutase from Hydrogenobaculum sp. (strain Y04AAS1).